Consider the following 132-residue polypeptide: uncharacterized protein (132 aa).

This is an uncharacterized protein from Bacillus subtilis (strain 168).